Here is a 376-residue protein sequence, read N- to C-terminus: 1-acyl-sn-glycerol-3-phosphate acyltransferase 3 (376 aa).

2 consecutive transmembrane segments (helical) span residues 14-34 and 49-69; these read VLFL…FIIV and VAEL…CIKI. The short motif at 92–97 is the HXXXXD motif element; it reads HRSDID. The next 3 helical transmembrane spans lie at 98–118, 306–326, and 335–355; these read WLIG…LAIM, LIVV…LLQW, and IILL…ILIQ.

It belongs to the 1-acyl-sn-glycerol-3-phosphate acyltransferase family. Predominantly expressed in pollen.

The protein resides in the membrane. The catalysed reaction is a 1-acyl-sn-glycero-3-phosphate + an acyl-CoA = a 1,2-diacyl-sn-glycero-3-phosphate + CoA. The protein operates within phospholipid metabolism; CDP-diacylglycerol biosynthesis; CDP-diacylglycerol from sn-glycerol 3-phosphate: step 2/3. Converts lysophosphatidic acid (LPA) into phosphatidic acid by incorporating acyl moiety at the 2 position. Has preference for C-18-CoA substrates compared to C-16-CoA substrates. The chain is 1-acyl-sn-glycerol-3-phosphate acyltransferase 3 (LPAT3) from Arabidopsis thaliana (Mouse-ear cress).